Here is a 225-residue protein sequence, read N- to C-terminus: Putative membrane protease YugP (225 aa).

A Zn(2+)-binding site is contributed by His-95. The active site involves Glu-96. The Zn(2+) site is built by His-99 and His-103. 3 helical membrane-spanning segments follow: residues 116–138, 140–162, and 192–212; these read IFPV…MLLG, LNLI…ITLP, and VLSA…FELL.

The protein resides in the cell membrane. This chain is Putative membrane protease YugP (yugP), found in Bacillus subtilis (strain 168).